The following is a 1149-amino-acid chain: Probable phospholipid-transporting ATPase IA (1149 aa).

The Cytoplasmic portion of the chain corresponds to 1–65 (MPTMRRTVSE…TAKYNIITFL (65 aa)). The residue at position 25 (serine 25) is a Phosphoserine. Threonine 28 carries the phosphothreonine modification. Serine 29 bears the Phosphoserine mark. Residues 66–86 (PRFLYSQFRRAANSFFLFIAL) form a helical membrane-spanning segment. Residues 87–92 (LQQIPD) are Extracellular-facing. The helical transmembrane segment at 93–115 (VSPTGRYTTLVPLLFILAVAAIK) threads the bilayer. The Cytoplasmic segment spans residues 116-297 (EIIEDIKRHK…SNVERITNVQ (182 aa)). The helical transmembrane segment at 298-319 (ILILFCILIAMSLVCSVGSAIW) threads the bilayer. The Extracellular segment spans residues 320–344 (NRRHSGRDWYLNLNYGGANNFGLNF). The helical transmembrane segment at 345–366 (LTFIILFNNLIPISLLVTLEVV) threads the bilayer. At 367–842 (KFTQAYFINW…GAWNYNRGSK (476 aa)) the chain is on the cytoplasmic side. The active-site 4-aspartylphosphate intermediate is the aspartate 409. ATP is bound by residues aspartate 409, lysine 410, threonine 411, glutamate 493, phenylalanine 534, lysine 557, arginine 590, threonine 670, glycine 671, aspartate 672, 726-733 (ALIIDGKT), arginine 760, and lysine 766. Aspartate 409 provides a ligand contact to Mg(2+). Residue threonine 411 coordinates Mg(2+). Aspartate 786 is a Mg(2+) binding site. The ATP site is built by asparagine 789 and aspartate 790. Aspartate 790 is a Mg(2+) binding site. A helical transmembrane segment spans residues 843–863 (CILYCFYKNIVLYIIEIWFAF). The Extracellular portion of the chain corresponds to 864 to 875 (VNGFSGQILFER). A helical membrane pass occupies residues 876–895 (WCIGLYNVMFTAMPPLTLGI). Topologically, residues 896 to 925 (FERSCRKEYMLKYPELYKTSQNALDFNTKV) are cytoplasmic. A helical transmembrane segment spans residues 926-947 (FWVHCLNGLFHSVILFWFPLKA). Topologically, residues 948-961 (LQYGTVFENGRTSD) are extracellular. The chain crosses the membrane as a helical span at residues 962–984 (YLLLGNFVYTFVVITVCLKAGLE). Residues 985-990 (TSYWTW) lie on the Cytoplasmic side of the membrane. The chain crosses the membrane as a helical span at residues 991-1011 (FSHIAIWGSIALWVVFFGIYS). Residues 1012–1029 (SLWPAVPMAPDMSGEAAM) are Extracellular-facing. Residues 1030–1055 (LFSSGVFWMGLLFIPVASLLLDVVYK) traverse the membrane as a helical segment. At 1056–1149 (VIKRTAFKTL…DTTKQRPDEW (94 aa)) the chain is on the cytoplasmic side. ATP is bound at residue 1080 to 1087 (GAVVLGKS). Position 1111 is a phosphoserine (serine 1111).

The protein belongs to the cation transport ATPase (P-type) (TC 3.A.3) family. Type IV subfamily. As to quaternary structure, component of a P4-ATPase flippase complex which consists of a catalytic alpha subunit and an accessory beta subunit. Interacts with TMEM30A to form a flippase complex; this complex forms an intermediate phosphoenzyme. Interacts with TMEM30B; this interaction is reported conflictingly. The cofactor is Mg(2+). Post-translationally, cleaved by calpain in a caspase- and calcium influx-dependent manner during platelet apoptosis leading to a 100 kDa polypeptide. As to expression, kidney.

Its subcellular location is the cytoplasmic vesicle. It localises to the secretory vesicle. The protein localises to the chromaffin granule membrane. The protein resides in the cytoplasmic granule. It is found in the cell membrane. Its subcellular location is the endoplasmic reticulum. It localises to the golgi apparatus. The enzyme catalyses ATP + H2O + phospholipidSide 1 = ADP + phosphate + phospholipidSide 2.. It carries out the reaction a 1,2-diacyl-sn-glycero-3-phospho-L-serine(out) + ATP + H2O = a 1,2-diacyl-sn-glycero-3-phospho-L-serine(in) + ADP + phosphate + H(+). In terms of biological role, catalytic component of a P4-ATPase flippase complex which catalyzes the hydrolysis of ATP coupled to the transport of aminophospholipids from the outer to the inner leaflet of various membranes and ensures the maintenance of asymmetric distribution of phospholipids. Phospholipid translocation also seems to be implicated in vesicle formation and in uptake of lipid signaling molecules. In vitro, its ATPase activity is selectively and stereospecifically stimulated by phosphatidylserine (PS). The flippase complex ATP8A1:TMEM30A seems to play a role in regulation of cell migration probably involving flippase-mediated translocation of phosphatidylethanolamine (PE) at the cell membrane. Acts as aminophospholipid translocase at the cell membrane in neuronal cells. This Bos taurus (Bovine) protein is Probable phospholipid-transporting ATPase IA.